We begin with the raw amino-acid sequence, 423 residues long: Glucose-1-phosphate adenylyltransferase (423 aa).

Alpha-D-glucose 1-phosphate contacts are provided by residues Y108, G173, 188 to 189 (EK), and S207.

The protein belongs to the bacterial/plant glucose-1-phosphate adenylyltransferase family. Homotetramer.

It catalyses the reaction alpha-D-glucose 1-phosphate + ATP + H(+) = ADP-alpha-D-glucose + diphosphate. It functions in the pathway glycan biosynthesis; glycogen biosynthesis. In terms of biological role, involved in the biosynthesis of ADP-glucose, a building block required for the elongation reactions to produce glycogen. Catalyzes the reaction between ATP and alpha-D-glucose 1-phosphate (G1P) to produce pyrophosphate and ADP-Glc. This is Glucose-1-phosphate adenylyltransferase from Francisella tularensis subsp. holarctica (strain FTNF002-00 / FTA).